A 460-amino-acid chain; its full sequence is MATGNVIQVIGAVVDVEFPQDAVPKVYNALEVENGAAKLVLEVEQQLGGGVVRCIAMGSSDGLRRGLKVTDLERAIEVPVGKATLGRIMNVLGEPVDMKGDIGEEERWSIHRPAPSYEELASSQDLLETGIKVIDLMCPFAKGGKVGLFGGAGVGKTVNMMELIRNIAIEHSGYSVFAGVGERTREGNDFYHEMTDSNVIDKVSLVYGQMNEPPGNRLRVALTGLTMAEKFRDEGRDVLLFIDNIYRYTLAGTEVSALLGRMPSAVGYQPTLAEEMGVLQERITSTKTGSITSVQAVYVPADDLTDPSPATTFAHLDATVVLSRQIASLGIYPAVDPLDSTSRQLDPLVVGQEHYDVARGVQSILQRYQELKDIIAILGMDELSEDDKLVVSRARKIQRFLSQPFFVAEVFTGSPGKYVALKDTIRGFKGIMDGEYDHLPEQAFYMVGSIDEAVEKGKKL.

Position 150-157 (150-157 (GGAGVGKT)) interacts with ATP.

The protein belongs to the ATPase alpha/beta chains family. F-type ATPases have 2 components, CF(1) - the catalytic core - and CF(0) - the membrane proton channel. CF(1) has five subunits: alpha(3), beta(3), gamma(1), delta(1), epsilon(1). CF(0) has three main subunits: a(1), b(2) and c(9-12). The alpha and beta chains form an alternating ring which encloses part of the gamma chain. CF(1) is attached to CF(0) by a central stalk formed by the gamma and epsilon chains, while a peripheral stalk is formed by the delta and b chains.

It is found in the cell inner membrane. The enzyme catalyses ATP + H2O + 4 H(+)(in) = ADP + phosphate + 5 H(+)(out). Its function is as follows. Produces ATP from ADP in the presence of a proton gradient across the membrane. The catalytic sites are hosted primarily by the beta subunits. The protein is ATP synthase subunit beta of Sodalis glossinidius (strain morsitans).